The following is a 62-amino-acid chain: uncharacterized protein (62 aa).

This is an uncharacterized protein from Solanum tuberosum (Potato).